The following is a 513-amino-acid chain: MQLNSNEISDLIRQRIATFNVTSQARNEGTIVSVSDGIISINGLADVMQGEMIELPGNRYALALNLERHSVGAVVMGPYSDLAEGLKVKGTGRILEVPVGRGLLGRVVNTLGQPIDGKGAIENDGYSPVEIIAPGVIERQSVDQPIQTGYKAVDAMVPIGRGQRELIIGDRQTGKTAMAIDAIINQKDSGIKCVYVAIGQKASTIANVVRKLEEHDALKNTIVVVATASDAAALQYLAPYSGCTMGEYFRDRGEDALIVYDDLSKQAVAYRQISLLLKRPPGREAFPGDVFYLHSRLLERASRVNVSYVERFTKGKVKGKTGSLTALPIIETQAGDVSAFVPTNVISITDGQIFLQTHLFNSGLRPAVDPGISVSRVGGAAQTKIVKKLSGGIRTALAQYRELAAFAQFSSDLDDATRKQLDHGEKVTELMKQKQYAPMSVAEQALAIFSAEKGYLGDVPLASIGDFESALMAYAKSEHSALLDTINKTGQYDDDIEQSLHKLLKTFTATQSW.

169 to 176 (GDRQTGKT) contacts ATP.

Belongs to the ATPase alpha/beta chains family. In terms of assembly, F-type ATPases have 2 components, CF(1) - the catalytic core - and CF(0) - the membrane proton channel. CF(1) has five subunits: alpha(3), beta(3), gamma(1), delta(1), epsilon(1). CF(0) has three main subunits: a(1), b(2) and c(9-12). The alpha and beta chains form an alternating ring which encloses part of the gamma chain. CF(1) is attached to CF(0) by a central stalk formed by the gamma and epsilon chains, while a peripheral stalk is formed by the delta and b chains.

The protein localises to the cell inner membrane. The enzyme catalyses ATP + H2O + 4 H(+)(in) = ADP + phosphate + 5 H(+)(out). Functionally, produces ATP from ADP in the presence of a proton gradient across the membrane. The alpha chain is a regulatory subunit. This is ATP synthase subunit alpha 2 from Photobacterium profundum (strain SS9).